The sequence spans 55 residues: Preprotein translocase subunit SecG (55 aa).

At 1-29 (MAKKSGSGLQSSAGLMRYYEADKNAVQVQ) the chain is on the cytoplasmic side. Residues 30–51 (PKVVLIVGAIVGIAVLFLSAVN) traverse the membrane as a helical segment. Over 52–55 (GFWP) the chain is Extracellular.

The protein belongs to the SEC61-beta family. As to quaternary structure, component of the protein translocase complex. Heterotrimer consisting of alpha (SecY), beta (SecG) and gamma (SecE) subunits. Can form oligomers of the heterotrimer.

Its subcellular location is the cell membrane. In terms of biological role, involved in protein export. The function of the beta subunit is unknown, but it may be involved in stabilization of the trimeric complex. The polypeptide is Preprotein translocase subunit SecG (Methanosarcina barkeri (strain Fusaro / DSM 804)).